The primary structure comprises 361 residues: MVADTVHVGQHLAGHPSVHLFGHEIVLDVSIPALILSTVGAAFLLRYTLSIFRLFLELTVLPGKDIKSFQSRKGETWAVVTGCTSGIGLEFARQLAAKKFNIILVGRRQSALTDLSKEIESKYDVHTKSVTVDVSTPGSARDDALTQLELLAQNLDVGILINNVGASHSMPVAFHETERSEMSRIIETNVTWTYLVTRSILPSMVARSKQKGAPKSLVITIGSLSGRIPSPLLASYSGTKAALATWTKALAEEVKPQGVIVELVQAAFVVSNMSKIRKSSPFVPTPAPFVRSTLNSIGLPRGAQGRPHERTPFWSHAILDYVVGFAGYVSEMAGIKVILGMHKDIRKRALKKAARDEKKAE.

Residues proline 32 to phenylalanine 52 form a helical membrane-spanning segment. Residues valine 79, aspartate 133, asparagine 163, arginine 198, tyrosine 236, lysine 240, valine 269, and serine 271 each contribute to the NADP(+) site. Tyrosine 236 functions as the Proton donor in the catalytic mechanism. Lysine 240 functions as the Lowers pKa of active site Tyr in the catalytic mechanism.

Belongs to the short-chain dehydrogenases/reductases (SDR) family.

It is found in the endoplasmic reticulum membrane. It carries out the reaction a very-long-chain (3R)-3-hydroxyacyl-CoA + NADP(+) = a very-long-chain 3-oxoacyl-CoA + NADPH + H(+). Its pathway is lipid metabolism; fatty acid biosynthesis. Its function is as follows. Component of the microsomal membrane bound fatty acid elongation system, which produces the 26-carbon very long-chain fatty acids (VLCFA) from palmitate. Catalyzes the reduction of the 3-ketoacyl-CoA intermediate that is formed in each cycle of fatty acid elongation. VLCFAs serve as precursors for ceramide and sphingolipids. This Cryptococcus neoformans var. neoformans serotype D (strain B-3501A) (Filobasidiella neoformans) protein is Very-long-chain 3-oxoacyl-CoA reductase.